We begin with the raw amino-acid sequence, 197 residues long: Glycerol-3-phosphate acyltransferase (197 aa).

The next 4 helical transmembrane spans lie at 1–21 (MNFL…FAIV), 78–98 (PVEA…SVFL), 112–132 (VLAG…LAVA), and 155–175 (VLLG…ILVW).

The protein belongs to the PlsY family. As to quaternary structure, probably interacts with PlsX.

It localises to the cell inner membrane. It carries out the reaction an acyl phosphate + sn-glycerol 3-phosphate = a 1-acyl-sn-glycero-3-phosphate + phosphate. It functions in the pathway lipid metabolism; phospholipid metabolism. Catalyzes the transfer of an acyl group from acyl-phosphate (acyl-PO(4)) to glycerol-3-phosphate (G3P) to form lysophosphatidic acid (LPA). This enzyme utilizes acyl-phosphate as fatty acyl donor, but not acyl-CoA or acyl-ACP. This is Glycerol-3-phosphate acyltransferase from Aromatoleum aromaticum (strain DSM 19018 / LMG 30748 / EbN1) (Azoarcus sp. (strain EbN1)).